The primary structure comprises 154 residues: Protein X (154 aa).

Positions 68 to 117 are mitochondrial targeting sequence; the sequence is PCALRFTSARRMETTVNAHRNLPKVLHKRTLGLSAMSTTDLEAYFKDCVF.

It belongs to the orthohepadnavirus protein X family. As to quaternary structure, may form homodimer. May interact with host CEBPA, CFLAR, CREB1, DDB1, E4F1, HBXIP, HSPD1/HSP60, NFKBIA, POLR2E and SMAD4. Interacts with host SMC5-SMC6 complex and induces its degradation. Interacts with host TRPC4AP; leading to prevent ubiquitination of TRPC4AP. Interacts with host PLSCR1; this interaction promotes ubiquitination and degradation of HBx and impairs HBx-mediated cell proliferation. In terms of processing, a fraction may be phosphorylated in insect cells and HepG2 cells, a human hepatoblastoma cell line. Phosphorylated in vitro by host protein kinase C or mitogen-activated protein kinase. N-acetylated in insect cells.

The protein localises to the host cytoplasm. The protein resides in the host nucleus. It localises to the host mitochondrion. Functionally, multifunctional protein that plays a role in silencing host antiviral defenses and promoting viral transcription. Does not seem to be essential for HBV infection. May be directly involved in development of cirrhosis and liver cancer (hepatocellular carcinoma). Most of cytosolic activities involve modulation of cytosolic calcium. The effect on apoptosis is controversial depending on the cell types in which the studies have been conducted. May induce apoptosis by localizing in mitochondria and causing loss of mitochondrial membrane potential. May also modulate apoptosis by binding host CFLAR, a key regulator of the death-inducing signaling complex (DISC). Promotes viral transcription by using the host E3 ubiquitin ligase DDB1 to target the SMC5-SMC6 complex to proteasomal degradation. This host complex would otherwise bind to viral episomal DNA, and prevents its transcription. Moderately stimulates transcription of many different viral and cellular transcription elements. Promoters and enhancers stimulated by HBx contain DNA binding sites for NF-kappa-B, AP-1, AP-2, c-EBP, ATF/CREB, or the calcium-activated factor NF-AT. This Hepatitis B virus genotype B1 subtype adw (isolate Japan/pJDW233/1988) (HBV-B) protein is Protein X.